The chain runs to 292 residues: 2-(5''-triphosphoribosyl)-3'-dephosphocoenzyme-A synthase (292 aa).

The protein belongs to the CitG/MdcB family.

The enzyme catalyses 3'-dephospho-CoA + ATP = 2'-(5''-triphospho-alpha-D-ribosyl)-3'-dephospho-CoA + adenine. Functionally, catalyzes the formation of 2-(5''-triphosphoribosyl)-3'-dephosphocoenzyme-A, the precursor of the prosthetic group of the holo-acyl carrier protein (gamma chain) of citrate lyase, from ATP and dephospho-CoA. The protein is 2-(5''-triphosphoribosyl)-3'-dephosphocoenzyme-A synthase of Escherichia coli O127:H6 (strain E2348/69 / EPEC).